A 339-amino-acid chain; its full sequence is UDP-N-acetylenolpyruvoylglucosamine reductase (339 aa).

The 172-residue stretch at 18-189 (GIDVKARYFS…LRVRFALTRT (172 aa)) folds into the FAD-binding PCMH-type domain. Arg-166 is an active-site residue. Ser-239 (proton donor) is an active-site residue. Residue Glu-335 is part of the active site.

Belongs to the MurB family. Requires FAD as cofactor.

It localises to the cytoplasm. The catalysed reaction is UDP-N-acetyl-alpha-D-muramate + NADP(+) = UDP-N-acetyl-3-O-(1-carboxyvinyl)-alpha-D-glucosamine + NADPH + H(+). Its pathway is cell wall biogenesis; peptidoglycan biosynthesis. Cell wall formation. The protein is UDP-N-acetylenolpyruvoylglucosamine reductase of Pseudomonas putida (strain ATCC 47054 / DSM 6125 / CFBP 8728 / NCIMB 11950 / KT2440).